We begin with the raw amino-acid sequence, 503 residues long: MTFAEDKTYKYIRDNHSKFCCVDVLEILPYLSCLTASDQDRLRASYRQIGNRDTLWGLFNNLQRRPGWVEVFIRALQICELPGLADQVTRVYQSYLPPGTSLRSLEPLQLPDFPAAVSGPSAFAPGHNIPDHGLRETPSCPKPVQDTQPPESPVENSEQLLQTNSGAVARMSGGSLIPSPNQQALSPQPSREHQEQEPELGGAHAANVASVPIATYGPVSPTVSFQPLPRTALRTNLLSGVTVSALSADTSLSSSSTGSAFAKGAGDQAKAATCFSTTLTNSVTTSSVPSPRLVPVKTMSSKLPLSSKSTAAMTSTVLTNTAPSKLPSNSVYAGTVPSRVPASVAKAPANTIPPERNSKQAKETPEGPATKVTTGGNQTGPNSSIRSLHSGPEMSKPGVLVSQLDEPFSACSVDLAISPSSSLVSEPNHGPEENEYSSFRIQVDESPSADLLGSPEPLATQQPQEEEEHCASSMPWAKWLGATSALLAVFLAVMLYRSRRLAQ.

The Cytoplasmic segment spans residues 1-478; the sequence is MTFAEDKTYK…HCASSMPWAK (478 aa). Glycyl lysine isopeptide (Lys-Gly) (interchain with G-Cter in ubiquitin) cross-links involve residues Lys7 and Lys10. The region spanning 10-77 is the CARD domain; it reads KYIRDNHSKF…WVEVFIRALQ (68 aa). Positions 10–77 are required for interaction with NLRX1; that stretch reads KYIRDNHSKF…WVEVFIRALQ (68 aa). Residue Cys79 is the site of S-palmitoyl cysteine attachment. The segment at 119–202 is disordered; sequence GPSAFAPGHN…HQEQEPELGG (84 aa). Positions 143–147 are interaction with TRAF2; it reads PVQDT. Residues 145 to 166 show a composition bias toward polar residues; it reads QDTQPPESPVENSEQLLQTNSG. Phosphoserine occurs at positions 152, 157, 172, 186, and 220. Residues 153–158 form an interaction with TRAF6 1 region; the sequence is PVENSE. Residues 178–189 show a composition bias toward polar residues; sequence PSPNQQALSPQP. Arg234 bears the Asymmetric dimethylarginine mark. Phosphoserine occurs at positions 251 and 256. Residue Lys302 forms a Glycyl lysine isopeptide (Lys-Gly) (interchain with G-Cter in ubiquitin) linkage. Positions 337–503 are interaction with DHX33; that stretch reads PSRVPASVAK…MLYRSRRLAQ (167 aa). Residues 346–398 form a disordered region; sequence KAPANTIPPERNSKQAKETPEGPATKVTTGGNQTGPNSSIRSLHSGPEMSKPG. Basic and acidic residues predominate over residues 356-365; that stretch reads RNSKQAKETP. The span at 371–387 shows a compositional bias: polar residues; the sequence is KVTTGGNQTGPNSSIRS. Ser384 is modified (phosphoserine). Positions 415–418 match the pLxIS motif motif; sequence LAIS. Residue Ser418 is modified to Phosphoserine; by TBK1. The interaction with TRAF6 2 stretch occupies residues 431-436; sequence PEENEY. The segment at 446 to 466 is disordered; the sequence is SPSADLLGSPEPLATQQPQEE. Residues 479–496 traverse the membrane as a helical segment; that stretch reads WLGATSALLAVFLAVMLY. Topologically, residues 497–503 are mitochondrial intermembrane; that stretch reads RSRRLAQ.

In terms of assembly, self-associates and polymerizes (via CARD domains) to form 400 nM long three-stranded helical filaments on mitochondria, filament nucleation requires interaction with RIGI whose CARD domains act as a template for filament assembly. Interacts with RIGI, IFIH1/MDA5, TRAF2, TRAF6 and C1QBP. May interact with FADD, RIPK1, IKBKE, CHUK and IKBKB. Interacts (when phosphorylated) with IRF3; following activation and phosphorylation on the pLxIS motif by TBK1, recruits IRF3. Interacts with NLRX1. Interaction with NLRX1 requires the CARD domain. Interacts with PSMA7. Interacts with TRAFD1. Interacts (via C-terminus) with PCBP2 in a complex containing MAVS/IPS1, PCBP2 and ITCH. Interacts with CYLD. Interacts with SRC. Interacts with DHX58/LGP2 and IKBKE. Interacts with STING1. Interacts with IFIT3 (via N-terminus). Interacts with TBK1 only in the presence of IFIT3. Interacts with TTLL12; the interaction prevents MAVS binding to TBK1 and IKBKE. Interacts with MUL1. Interacts with ANKRD17. Interacts with NDFIP1. Interacts with SMURF1; the interaction is mediated by NDFIP1 and leads to MAVS ubiquitination and degradation. Interacts (via C-terminus) with GPATCH3; the interaction is markedly increased upon viral infection. Directly interacts (via CARD domain) with ATG5 and ATG12, either as ATG5 and ATG12 monomers or as ATG12-ATG5 conjugates. Interacts with DHX33 (via the helicase C-terminal domain). Interacts with DDX3X (via C-terminus); this interaction may occur rapidly, but transiently after viral infection. The interaction with DDX3X potentiates MAVS-mediated IFNB induction. Conversely inhibition of this interaction prevents MAVS-mediated IFNB induction. Transiently interacts with TRAF3 early during viral infection. Interacts with CLPB. Interacts with TRAF3IP3. Interacts with TOMM70; the interaction is enhanced by virus infection. Interacts with ZNFX1. Interacts with DHX15. Interacts with N4BP3; this interaction promotes the polyubiquitination of MAVS. Interacts with TAX1BP1; this interaction induces MAVS polyubiquitination. Interacts with NLRP3; promoting NLRP3 recruitment to mitochondria and activation of the NLRP3 inflammasome. Interacts with ECSIT; this interaction bridges RIGI to the MAVS complex at the mitochondrion. Interacts with UBL7; this interaction promotes MAVS 'Lys-27'-linked ubiquitination leading to type I interferon production. Interacts (via transmembrane domain) with SMIM30/MAVI1 (via transmembrane domain); the interaction disrupts MAVS interaction with RIGI and inhibits MAVS aggregation, resulting in the repression of type I interferon signaling and innate immune responses. In terms of processing, following activation, phosphorylated by TBK1 at Ser-418 in the pLxIS motif. The phosphorylated pLxIS motif constitutes an IRF3-binding motif, leading to recruitment of the transcription factor IRF3 to induce type-I interferons and other cytokines. Ubiquitinated. Undergoes 'Lys-48'-linked polyubiquitination catalyzed by ITCH; ITCH-dependent polyubiquitination is mediated by the interaction with PCBP2 and leads to MAVS/IPS1 proteasomal degradation. Ubiquitinated by RNF125, leading to its degradation by the proteasome. Undergoes 'Lys-48'-linked ubiquitination catalyzed by SMURF1. Undergoes 'Lys-48'-linked ubiquitination catalyzed by MARCHF5 at Lys-7, leading to proteasomal degradation. Ubiquitinated via 'Lys-63'-linked ubiquitination at Lys-10 by TRIM31, promoting MAVS polymerization and formation of three-stranded helical filaments on mitochondria. Undergoes 'Lys-63'-linked ubiquitination leading to enhanced interaction between MAVS and TRAF2. Undergoes 'Lys-27'-linked ubiquitination by UBE2N and TRIM21 leading to enhanced interaction between MAVS and TBK1. Deubiquitinated by USP10 leading to attenuation of RIGI-mediated MAVS aggregation and production of type I interferon. Undergoes 'Lys-48'-linked polyubiquitination catalyzed by RNF115 leading to its degradation. Post-translationally, proteolytically cleaved by apoptotic caspases during apoptosis, leading to its inactivation. Cleavage by CASP3 during virus-induced apoptosis inactivates it, preventing cytokine overproduction. In terms of processing, palmitoylated by ZHDDC4. Palmitoylation promotes MAVS stabilization and activation by inhibiting 'Lys-48'- but facilitating 'Lys-63'-linked ubiquitination.

The protein localises to the mitochondrion outer membrane. It localises to the mitochondrion. The protein resides in the peroxisome. Adapter required for innate immune defense against viruses. Acts downstream of DHX33, RIGI and IFIH1/MDA5, which detect intracellular dsRNA produced during viral replication, to coordinate pathways leading to the activation of NF-kappa-B, IRF3 and IRF7, and to the subsequent induction of antiviral cytokines such as IFN-beta and RANTES (CCL5). Peroxisomal and mitochondrial MAVS act sequentially to create an antiviral cellular state. Upon viral infection, peroxisomal MAVS induces the rapid interferon-independent expression of defense factors that provide short-term protection, whereas mitochondrial MAVS activates an interferon-dependent signaling pathway with delayed kinetics, which amplifies and stabilizes the antiviral response. May activate the same pathways following detection of extracellular dsRNA by TLR3. May protect cells from apoptosis. Involved in NLRP3 inflammasome activation by mediating NLRP3 recruitment to mitochondria. This Mus musculus (Mouse) protein is Mitochondrial antiviral-signaling protein.